We begin with the raw amino-acid sequence, 232 residues long: LexA repressor (232 aa).

The H-T-H motif DNA-binding region spans phenylalanine 26–threonine 46. Active-site for autocatalytic cleavage activity residues include serine 153 and lysine 191.

It belongs to the peptidase S24 family. In terms of assembly, homodimer.

The catalysed reaction is Hydrolysis of Ala-|-Gly bond in repressor LexA.. In terms of biological role, represses a number of genes involved in the response to DNA damage (SOS response), including recA and lexA. In the presence of single-stranded DNA, RecA interacts with LexA causing an autocatalytic cleavage which disrupts the DNA-binding part of LexA, leading to derepression of the SOS regulon and eventually DNA repair. This chain is LexA repressor, found in Afipia carboxidovorans (strain ATCC 49405 / DSM 1227 / KCTC 32145 / OM5) (Oligotropha carboxidovorans).